Here is a 415-residue protein sequence, read N- to C-terminus: MFS-type transporter FVEG_12626 (415 aa).

The segment covering 1–18 has biased composition (basic and acidic residues); it reads MDPDTEQMRVEKPNHEQP. Residues 1–22 are disordered; it reads MDPDTEQMRVEKPNHEQPKPNT. 6 helical membrane-spanning segments follow: residues 27–47, 63–83, 93–113, 118–138, 151–171, and 178–198; these read GGFK…VGVF, TVSW…PFVG, YLLL…SISS, YILS…YPSF, LALG…PIVV, and IGFG…LLVT. N-linked (GlcNAc...) asparagine glycosylation is present at asparagine 199. Transmembrane regions (helical) follow at residues 227–247, 264–284, 290–310, 318–338, 354–374, and 386–406; these read FILT…PITF, YLVS…GYIA, FNVS…LWLP, IAFA…SPAL, TMYA…GALI, and VFAG…RLYI.

It belongs to the major facilitator superfamily. Monocarboxylate porter (TC 2.A.1.13) family.

Its subcellular location is the membrane. Functionally, MFS-type transporter; part of the Fusarium detoxification of benzoxazolinone cluster 2 (FDB2) involved in the degradation of benzoxazolinones produced by the host plant. Maize, wheat, and rye produce the 2 benzoxazinone phytoanticipins 2,4-dihy-droxy-7-methoxy-1,4-benzoxazin-3-one (DIMBOA) and 2,4-dihydroxy-1,4-benzoxazin-3-one (DIBOA) that, due to their inherent instability once released, spontaneously degrade to the more stable corresponding benzoxazolinones, 6-methoxy-2-benzoxazolinone (MBOA) and 2-benzoxazolinone (BOA), respectively. This chain is MFS-type transporter FVEG_12626, found in Gibberella moniliformis (strain M3125 / FGSC 7600) (Maize ear and stalk rot fungus).